The chain runs to 137 residues: Small heat shock protein IbpA (137 aa).

A sHSP domain is found at 28-137 (SQSNGGYPPY…ANKPRRIEIN (110 aa)).

The protein belongs to the small heat shock protein (HSP20) family. In terms of assembly, monomer. Forms homomultimers of about 100-150 subunits at optimal growth temperatures. Conformation changes to monomers at high temperatures or high ionic concentrations.

It localises to the cytoplasm. Its function is as follows. Associates with aggregated proteins, together with IbpB, to stabilize and protect them from irreversible denaturation and extensive proteolysis during heat shock and oxidative stress. Aggregated proteins bound to the IbpAB complex are more efficiently refolded and reactivated by the ATP-dependent chaperone systems ClpB and DnaK/DnaJ/GrpE. Its activity is ATP-independent. The protein is Small heat shock protein IbpA of Citrobacter koseri (strain ATCC BAA-895 / CDC 4225-83 / SGSC4696).